The sequence spans 431 residues: Histidinol dehydrogenase 1 (431 aa).

Residues Tyr-127, Gln-188, and Asn-211 each coordinate NAD(+). Residues Ser-234, Gln-256, and His-259 each contribute to the substrate site. Positions 256 and 259 each coordinate Zn(2+). Residues Glu-324 and His-325 each act as proton acceptor in the active site. The substrate site is built by His-325, Asp-358, Glu-412, and His-417. Residue Asp-358 coordinates Zn(2+). Position 417 (His-417) interacts with Zn(2+).

It belongs to the histidinol dehydrogenase family. Zn(2+) is required as a cofactor.

The enzyme catalyses L-histidinol + 2 NAD(+) + H2O = L-histidine + 2 NADH + 3 H(+). It functions in the pathway amino-acid biosynthesis; L-histidine biosynthesis; L-histidine from 5-phospho-alpha-D-ribose 1-diphosphate: step 9/9. Catalyzes the sequential NAD-dependent oxidations of L-histidinol to L-histidinaldehyde and then to L-histidine. This Nostoc sp. (strain PCC 7120 / SAG 25.82 / UTEX 2576) protein is Histidinol dehydrogenase 1 (hisD1).